Reading from the N-terminus, the 507-residue chain is Rho GTPase-activating protein 19 (507 aa).

The 194-residue stretch at 112–305 (APLTEEGIAQ…FMIKHSQKLF (194 aa)) folds into the Rho-GAP domain. Disordered regions lie at residues 344 to 371 (FLKH…QQHT), 400 to 419 (KNTP…KKHV), and 483 to 507 (DLQI…ETSI). Residues 355-369 (SSPSSSTSLQEQTQQ) show a composition bias toward low complexity. The segment covering 400-413 (KNTPRTPVSDTQVP) has biased composition (polar residues). Residues 483-492 (DLQIRKEASS) show a composition bias toward basic and acidic residues.

Functionally, GTPase activator for the Rho-type GTPases by converting them to an inactive GDP-bound state. The sequence is that of Rho GTPase-activating protein 19 (arhgap19) from Xenopus laevis (African clawed frog).